We begin with the raw amino-acid sequence, 160 residues long: SsrA-binding protein (160 aa).

The span at 138 to 148 (KRDDIKDREWQ) shows a compositional bias: basic and acidic residues. The tract at residues 138-160 (KRDDIKDREWQTAKSRIMKHANR) is disordered.

Belongs to the SmpB family.

The protein localises to the cytoplasm. Required for rescue of stalled ribosomes mediated by trans-translation. Binds to transfer-messenger RNA (tmRNA), required for stable association of tmRNA with ribosomes. tmRNA and SmpB together mimic tRNA shape, replacing the anticodon stem-loop with SmpB. tmRNA is encoded by the ssrA gene; the 2 termini fold to resemble tRNA(Ala) and it encodes a 'tag peptide', a short internal open reading frame. During trans-translation Ala-aminoacylated tmRNA acts like a tRNA, entering the A-site of stalled ribosomes, displacing the stalled mRNA. The ribosome then switches to translate the ORF on the tmRNA; the nascent peptide is terminated with the 'tag peptide' encoded by the tmRNA and targeted for degradation. The ribosome is freed to recommence translation, which seems to be the essential function of trans-translation. This chain is SsrA-binding protein, found in Serratia proteamaculans (strain 568).